A 221-amino-acid chain; its full sequence is Ribonuclease T (221 aa).

One can recognise an Exonuclease domain in the interval 21 to 195; that stretch reads VVIDIESAGF…YDTIQTAYLF (175 aa). Mg(2+) is bound by residues aspartate 24, glutamate 26, histidine 182, and aspartate 187. The Proton donor/acceptor role is filled by histidine 182.

This sequence belongs to the RNase T family. As to quaternary structure, homodimer. Requires Mg(2+) as cofactor.

Trims short 3' overhangs of a variety of RNA species, leaving a one or two nucleotide 3' overhang. Responsible for the end-turnover of tRNA: specifically removes the terminal AMP residue from uncharged tRNA (tRNA-C-C-A). Also appears to be involved in tRNA biosynthesis. This is Ribonuclease T from Buchnera aphidicola subsp. Cinara cedri (strain Cc).